Here is a 273-residue protein sequence, read N- to C-terminus: Phosphatidylglycerol--prolipoprotein diacylglyceryl transferase (273 aa).

The next 7 membrane-spanning stretches (helical) occupy residues 21-41 (VSVRWYGLMYLVGFMFALWLA), 60-80 (LLFAGFLGVVIGGRVGYVIFY), 95-115 (VWTGGMSFHGGLLGVITAMFW), 124-144 (FFGVADFVAPLVPFGLGMGRM), 176-196 (SQLYEMFLEGIVLFFILNWFI), 203-223 (GAVSGLFLAGYGTFRFLVEFV), and 237-257 (ISMGQILSSPMIILGILMMVW). R143 lines the a 1,2-diacyl-sn-glycero-3-phospho-(1'-sn-glycerol) pocket.

This sequence belongs to the Lgt family.

The protein localises to the cell inner membrane. It catalyses the reaction L-cysteinyl-[prolipoprotein] + a 1,2-diacyl-sn-glycero-3-phospho-(1'-sn-glycerol) = an S-1,2-diacyl-sn-glyceryl-L-cysteinyl-[prolipoprotein] + sn-glycerol 1-phosphate + H(+). The protein operates within protein modification; lipoprotein biosynthesis (diacylglyceryl transfer). Catalyzes the transfer of the diacylglyceryl group from phosphatidylglycerol to the sulfhydryl group of the N-terminal cysteine of a prolipoprotein, the first step in the formation of mature lipoproteins. In Vibrio campbellii (strain ATCC BAA-1116), this protein is Phosphatidylglycerol--prolipoprotein diacylglyceryl transferase.